We begin with the raw amino-acid sequence, 428 residues long: MLDPKFLRNELEITAERLATRGFILDVDNLTKLEEKRKSLQVATEDLQASRNAISKSIGQAKARGEDTSSIMAQVGDLGAQLDSKKAELAELLQQINSIAMSVPNLPDESAPVGADENDNVEVRRWGTPKVFDFEVKDHIDLGEALEGLDFKNAVKISGSRFIIMRGQIARLNRALGQFMLDLHTTEHGYTETYVPLLVNEESLLGTGQLPKFGEDLFHTKPATEEGQGLSLIPTAEVPLTNYVRDMIVDETELPMKMTALTPCFRSEAGSYGRDTRGVIRLHQFDKVELVQIAHPDHSMQALEDITSHAEKVLQLLNLPYRTMVLCTGDMGFGSSKTFDIEVWLPAQNTYREISSCSNMKDFQARRMQARYRSKADNKPALLHTLNGSGLAVGRTLVAVIENYQNQDGTITVPEALRPYMGGLSLIG.

Residue 235-237 participates in L-serine binding; that stretch reads TAE. 266–268 contacts ATP; sequence RSE. Glutamate 289 provides a ligand contact to L-serine. An ATP-binding site is contributed by 353–356; that stretch reads EISS. An L-serine-binding site is contributed by serine 389.

This sequence belongs to the class-II aminoacyl-tRNA synthetase family. Type-1 seryl-tRNA synthetase subfamily. As to quaternary structure, homodimer. The tRNA molecule binds across the dimer.

The protein resides in the cytoplasm. It catalyses the reaction tRNA(Ser) + L-serine + ATP = L-seryl-tRNA(Ser) + AMP + diphosphate + H(+). The enzyme catalyses tRNA(Sec) + L-serine + ATP = L-seryl-tRNA(Sec) + AMP + diphosphate + H(+). The protein operates within aminoacyl-tRNA biosynthesis; selenocysteinyl-tRNA(Sec) biosynthesis; L-seryl-tRNA(Sec) from L-serine and tRNA(Sec): step 1/1. Functionally, catalyzes the attachment of serine to tRNA(Ser). Is also able to aminoacylate tRNA(Sec) with serine, to form the misacylated tRNA L-seryl-tRNA(Sec), which will be further converted into selenocysteinyl-tRNA(Sec). The polypeptide is Serine--tRNA ligase (Shewanella frigidimarina (strain NCIMB 400)).